The sequence spans 964 residues: Translation initiation factor IF-2 (964 aa).

Basic and acidic residues predominate over residues 1 to 10 (MSDKTNDDKT). Residues 1-379 (MSDKTNDDKT…SQMQETREKI (379 aa)) form a disordered region. Polar residues predominate over residues 27-37 (EQSTVRQNFSH). The segment covering 77–102 (APAASTPAPAQAAQPAQAAPVVRAPA) has biased composition (low complexity). The segment covering 103–113 (PATPAPKPAAP) has biased composition (pro residues). A compositionally biased stretch (low complexity) spans 114 to 140 (AAPVTKPHVAQQRPAQQRPGGQQAQRP). 2 stretches are compositionally biased toward basic and acidic residues: residues 156-227 (SEMD…EAAK) and 234-243 (ARTERRDDAR). Positions 250-278 (RPQQAGRPQGNRPPQGGRPQQGGPRPAAP) are enriched in low complexity. Residues 323 to 338 (PEVRAPKVVKTEDDRR) are compositionally biased toward basic and acidic residues. The 168-residue stretch at 462–629 (SRPPVVTIMG…AILLQAEILD (168 aa)) folds into the tr-type G domain. Residues 471-478 (GHVDHGKT) are G1. 471–478 (GHVDHGKT) contacts GTP. The tract at residues 496–500 (GITQH) is G2. Positions 517 to 520 (DTPG) are G3. GTP-binding positions include 517 to 521 (DTPGH) and 571 to 574 (NKID). The tract at residues 571–574 (NKID) is G4. Residues 607 to 609 (SAK) form a G5 region.

The protein belongs to the TRAFAC class translation factor GTPase superfamily. Classic translation factor GTPase family. IF-2 subfamily.

It localises to the cytoplasm. In terms of biological role, one of the essential components for the initiation of protein synthesis. Protects formylmethionyl-tRNA from spontaneous hydrolysis and promotes its binding to the 30S ribosomal subunits. Also involved in the hydrolysis of GTP during the formation of the 70S ribosomal complex. This chain is Translation initiation factor IF-2, found in Brucella anthropi (strain ATCC 49188 / DSM 6882 / CCUG 24695 / JCM 21032 / LMG 3331 / NBRC 15819 / NCTC 12168 / Alc 37) (Ochrobactrum anthropi).